The primary structure comprises 207 residues: Protein GET1 (207 aa).

At 1–4 (MPSL) the chain is on the lumenal side. The chain crosses the membrane as a helical span at residues 5–24 (LISVLFLHIAIYIINTIAAS). Over 25-110 (TIDSLLWLIY…FFDVAVKALR (86 aa)) the chain is Cytoplasmic. Positions 44–97 (IAREQHQMKLEVVQLKREMNATSSQDEFAKWAKLRRRHDKALEEYEVKNKQFSR) form a coiled coil. The helical transmembrane segment at 111 to 131 (WAGTSGLIVFLQFWFSKTPIF) threads the bilayer. Topologically, residues 132 to 155 (TLPPSWIPWQVEWVLSFPRAPMGT) are lumenal. The chain crosses the membrane as a helical span at residues 156 to 172 (VSIQVWGGACAVVVALI). Residues 173–207 (GEAIGATVRYLYASKDSMEAIKVGAGAVEKEKKRQ) lie on the Cytoplasmic side of the membrane.

Belongs to the WRB/GET1 family. Interacts with GET3.

Its subcellular location is the endoplasmic reticulum membrane. Its function is as follows. Required for the post-translational delivery of tail-anchored (TA) proteins to the endoplasmic reticulum. Acts as a membrane receptor for soluble GET3, which recognizes and selectively binds the transmembrane domain of TA proteins in the cytosol. This chain is Protein GET1, found in Paracoccidioides brasiliensis (strain Pb18).